Here is a 773-residue protein sequence, read N- to C-terminus: E3 ubiquitin-protein ligase RFWD3 (773 aa).

Disordered regions lie at residues 18 to 67 (VAEQ…SQVG), 92 to 117 (RVENINPGASEEHRQPSRVNRPIPVS), 139 to 230 (LRPP…EEVV), and 259 to 279 (GETLPKQSPQKTNPLLPSVSK). Ser47 carries the phosphoserine; by ATM and ATR modification. Over residues 50–59 (APPLLQPAPA) the composition is skewed to low complexity. Ser64 carries the post-translational modification Phosphoserine; by ATM and ATR. Over residues 151–164 (RSRRRRGSASRRSR) the composition is skewed to basic residues. Over residues 186-205 (VSRTQPHLPSMSQDSETRNP) the composition is skewed to polar residues. A compositionally biased stretch (low complexity) spans 207-221 (SEDLQVSSSSSSDSE). Positions 263-273 (PKQSPQKTNPL) are enriched in polar residues. An RING-type; degenerate zinc finger spans residues 287-331 (CTICFEHWTNAGDHRLSALRCGHLFGYKCISKWLKGQARKCPQCN). The stretch at 361 to 403 (SLLKEQMLRKQAELESAQCRLQLQVLTDECSKLHSRVQDLQKL) forms a coiled coil. WD repeat units follow at residues 494-536 (MHGK…QTYN), 538-576 (GRPVWSCCWCLDESNHIYAGLVNGSILVYDLRNTSSHIQ), and 582-627 (KARC…SHWP).

In terms of assembly, interacts with MDM2 and p53/TP53. Binds to the RPA complex via direct interaction with RPA2. Interacts with RAD51. Post-translationally, phosphorylated at Ser-46 and Ser-63 upon DNA damage by ATM or ATR. ATM phosphorylation occurs at early times upon DNA damage, while ATR is the major kinase at later times. Phosphorylation by ATM and ATR is required to stabilize p53/TP53. Part of the phosphorylation depends upon RPA2 presence.

It localises to the nucleus. The protein localises to the PML body. Its subcellular location is the cytoplasm. It carries out the reaction S-ubiquitinyl-[E2 ubiquitin-conjugating enzyme]-L-cysteine + [acceptor protein]-L-lysine = [E2 ubiquitin-conjugating enzyme]-L-cysteine + N(6)-ubiquitinyl-[acceptor protein]-L-lysine.. The protein operates within protein modification; protein ubiquitination. Its function is as follows. E3 ubiquitin-protein ligase required for the repair of DNA interstrand cross-links (ICL) in response to DNA damage. Plays a key role in RPA-mediated DNA damage signaling and repair. Acts by mediating ubiquitination of the RPA complex (RPA1, RPA2 and RPA3 subunits) and RAD51 at stalled replication forks, leading to remove them from DNA damage sites and promote homologous recombination. Also mediates the ubiquitination of p53/TP53 in the late response to DNA damage, and acts as a positive regulator of p53/TP53 stability, thereby regulating the G1/S DNA damage checkpoint. May act by catalyzing the formation of short polyubiquitin chains on p53/TP53 that are not targeted to the proteasome. In response to ionizing radiation, interacts with MDM2 and enhances p53/TP53 ubiquitination, possibly by restricting MDM2 from extending polyubiquitin chains on ubiquitinated p53/TP53. Required to translesion DNA synthesis across DNA-protein cross-link adducts by catalyzing ubiquitination of proteins on single-stranded DNA (ssDNA). This Ailuropoda melanoleuca (Giant panda) protein is E3 ubiquitin-protein ligase RFWD3 (RFWD3).